The primary structure comprises 242 residues: Probable transcriptional regulatory protein Bphy_2064 (242 aa).

This sequence belongs to the TACO1 family.

It is found in the cytoplasm. The polypeptide is Probable transcriptional regulatory protein Bphy_2064 (Paraburkholderia phymatum (strain DSM 17167 / CIP 108236 / LMG 21445 / STM815) (Burkholderia phymatum)).